The following is a 767-amino-acid chain: Photosystem I P700 chlorophyll a apoprotein A1 (767 aa).

8 consecutive transmembrane segments (helical) span residues 72-95 (IFSAHFGHLAVIFIWLSGAFFHGA), 158-181 (LMALAIGALVMAGLMLNAGVFHYH), 197-221 (LNHHLAGLLGLGSLSWAGHLIHVSA), 305-323 (IAHHHVAIAVLFIVAGHMY), 364-387 (WHAQLGLNLAMLGSLSIIVAQHMY), 403-429 (IGLFTHHMWIGGFLIVGGAAHAAIAMV), 451-473 (AIISHLNWVCIWLGAHSFGLYIH), and 548-566 (FMVHHIHAFTIHVTVLILL). [4Fe-4S] cluster-binding residues include Cys-590 and Cys-599. 2 helical membrane-spanning segments follow: residues 606 to 627 (HVFLGLFWMYNSLSIVIFHFSW) and 681 to 703 (TSAYGIMFLGAHFIWAFSLMFLF). Position 692 (His-692) interacts with chlorophyll a'. Residues Met-700 and Tyr-708 each coordinate chlorophyll a. Trp-709 contributes to the phylloquinone binding site. The helical transmembrane segment at 741–761 (AVGVAHYLLGGIATTWAFFHA) threads the bilayer.

The protein belongs to the PsaA/PsaB family. As to quaternary structure, the PsaA/B heterodimer binds the P700 chlorophyll special pair and subsequent electron acceptors. PSI consists of a core antenna complex that captures photons, and an electron transfer chain that converts photonic excitation into a charge separation. The cyanobacterial PSI reaction center is composed of one copy each of PsaA,B,C,D,E,F,I,J,K,L,M and X, and forms trimeric complexes. It depends on PSI electron transfer chain: 5 chlorophyll a, 1 chlorophyll a', 2 phylloquinones and 3 4Fe-4S clusters. PSI core antenna: 90 chlorophyll a, 22 carotenoids, 3 phospholipids and 1 galactolipid. P700 is a chlorophyll a/chlorophyll a' dimer, A0 is one or more chlorophyll a, A1 is one or both phylloquinones and FX is a shared 4Fe-4S iron-sulfur center. as a cofactor.

The protein localises to the cellular thylakoid membrane. It catalyses the reaction reduced [plastocyanin] + hnu + oxidized [2Fe-2S]-[ferredoxin] = oxidized [plastocyanin] + reduced [2Fe-2S]-[ferredoxin]. In terms of biological role, psaA and PsaB bind P700, the primary electron donor of photosystem I (PSI), as well as the electron acceptors A0, A1 and FX. PSI is a plastocyanin/cytochrome c6-ferredoxin oxidoreductase, converting photonic excitation into a charge separation, which transfers an electron from the donor P700 chlorophyll pair to the spectroscopically characterized acceptors A0, A1, FX, FA and FB in turn. Oxidized P700 is reduced on the lumenal side of the thylakoid membrane by plastocyanin or cytochrome c6. The protein is Photosystem I P700 chlorophyll a apoprotein A1 of Parasynechococcus marenigrum (strain WH8102).